A 140-amino-acid polypeptide reads, in one-letter code: ATP synthase epsilon chain (140 aa).

Belongs to the ATPase epsilon chain family. F-type ATPases have 2 components, CF(1) - the catalytic core - and CF(0) - the membrane proton channel. CF(1) has five subunits: alpha(3), beta(3), gamma(1), delta(1), epsilon(1). CF(0) has three main subunits: a, b and c.

The protein localises to the cell inner membrane. In terms of biological role, produces ATP from ADP in the presence of a proton gradient across the membrane. The protein is ATP synthase epsilon chain of Neisseria gonorrhoeae (strain ATCC 700825 / FA 1090).